A 388-amino-acid chain; its full sequence is Translation initiation factor eIF2B subunit beta (388 aa).

Residues 109–133 form a disordered region; sequence DDFETTTSNNNNNNNNNNINSSSNI. Low complexity predominate over residues 116–133; sequence SNNNNNNNNNNINSSSNI.

This sequence belongs to the eIF-2B alpha/beta/delta subunits family. In terms of assembly, component of the translation initiation factor 2B (eIF2B) complex which is a heterodecamer of two sets of five different subunits: alpha, beta, gamma, delta and epsilon. Subunits alpha, beta and delta comprise a regulatory subcomplex and subunits epsilon and gamma comprise a catalytic subcomplex. Within the complex, the hexameric regulatory complex resides at the center, with the two heterodimeric catalytic subcomplexes bound on opposite sides.

It is found in the cytoplasm. Its subcellular location is the cytosol. Its function is as follows. Acts as a component of the translation initiation factor 2B (eIF2B) complex, which catalyzes the exchange of GDP for GTP on eukaryotic initiation factor 2 (eIF2) gamma subunit. Its guanine nucleotide exchange factor activity is repressed when bound to eIF2 complex phosphorylated on the alpha subunit, thereby limiting the amount of methionyl-initiator methionine tRNA available to the ribosome and consequently global translation is repressed. This is Translation initiation factor eIF2B subunit beta (eif2b2) from Dictyostelium discoideum (Social amoeba).